A 221-amino-acid chain; its full sequence is 7-cyano-7-deazaguanine synthase (221 aa).

10-20 (FSGGQDSTTCL) is an ATP binding site. Residues Cys186, Cys195, Cys198, and Cys201 each contribute to the Zn(2+) site.

This sequence belongs to the QueC family. As to quaternary structure, homodimer. Requires Zn(2+) as cofactor.

It catalyses the reaction 7-carboxy-7-deazaguanine + NH4(+) + ATP = 7-cyano-7-deazaguanine + ADP + phosphate + H2O + H(+). It functions in the pathway purine metabolism; 7-cyano-7-deazaguanine biosynthesis. Functionally, catalyzes the ATP-dependent conversion of 7-carboxy-7-deazaguanine (CDG) to 7-cyano-7-deazaguanine (preQ(0)). This chain is 7-cyano-7-deazaguanine synthase, found in Geobacillus kaustophilus (strain HTA426).